Here is a 464-residue protein sequence, read N- to C-terminus: ATP synthase subunit beta (464 aa).

152–159 is an ATP binding site; that stretch reads GGAGVGKT.

The protein belongs to the ATPase alpha/beta chains family. F-type ATPases have 2 components, CF(1) - the catalytic core - and CF(0) - the membrane proton channel. CF(1) has five subunits: alpha(3), beta(3), gamma(1), delta(1), epsilon(1). CF(0) has three main subunits: a(1), b(2) and c(9-12). The alpha and beta chains form an alternating ring which encloses part of the gamma chain. CF(1) is attached to CF(0) by a central stalk formed by the gamma and epsilon chains, while a peripheral stalk is formed by the delta and b chains.

Its subcellular location is the cell membrane. The catalysed reaction is ATP + H2O + 4 H(+)(in) = ADP + phosphate + 5 H(+)(out). Functionally, produces ATP from ADP in the presence of a proton gradient across the membrane. The catalytic sites are hosted primarily by the beta subunits. The sequence is that of ATP synthase subunit beta from Clostridioides difficile (strain 630) (Peptoclostridium difficile).